The primary structure comprises 128 residues: Large ribosomal subunit protein bL12 (128 aa).

Belongs to the bacterial ribosomal protein bL12 family. In terms of assembly, homodimer. Part of the ribosomal stalk of the 50S ribosomal subunit. Forms a multimeric L10(L12)X complex, where L10 forms an elongated spine to which 2 to 4 L12 dimers bind in a sequential fashion. Binds GTP-bound translation factors.

Its function is as follows. Forms part of the ribosomal stalk which helps the ribosome interact with GTP-bound translation factors. Is thus essential for accurate translation. This chain is Large ribosomal subunit protein bL12, found in Phenylobacterium zucineum (strain HLK1).